Here is an 86-residue protein sequence, read N- to C-terminus: Chymotrypsin inhibitor (86 aa).

An N-terminal signal peptide occupies residues 1-22 (MKLLFAIVALLALAFLCADISA).

The protein belongs to the protease inhibitor I13 (potato type I serine protease inhibitor) family. Monomer. Expressed in the body wall, coelomocytes and at a lower level in intestine.

Its subcellular location is the secreted. Inhibits L.terrestris digestive chymotrypsin LT_CH 1 and bovine alpha-chymotrypsin. In Lumbricus terrestris (Common earthworm), this protein is Chymotrypsin inhibitor.